We begin with the raw amino-acid sequence, 396 residues long: Elongation factor Tu (396 aa).

The tr-type G domain occupies 10-206; it reads KPHVNVGTIG…TMDSYIPEPV (197 aa). The tract at residues 19–26 is G1; it reads GHVDHGKT. 19–26 is a binding site for GTP; sequence GHVDHGKT. Thr26 contributes to the Mg(2+) binding site. Positions 60-64 are G2; the sequence is GITIS. The tract at residues 81–84 is G3; sequence DCPG. GTP is bound by residues 81–85 and 136–139; these read DCPGH and NKAD. Residues 136–139 are G4; the sequence is NKAD. The tract at residues 174 to 176 is G5; that stretch reads SAL.

Belongs to the TRAFAC class translation factor GTPase superfamily. Classic translation factor GTPase family. EF-Tu/EF-1A subfamily. As to quaternary structure, monomer.

The protein localises to the cytoplasm. The catalysed reaction is GTP + H2O = GDP + phosphate + H(+). Its function is as follows. GTP hydrolase that promotes the GTP-dependent binding of aminoacyl-tRNA to the A-site of ribosomes during protein biosynthesis. The chain is Elongation factor Tu from Legionella pneumophila (strain Lens).